A 316-amino-acid polypeptide reads, in one-letter code: MSDISKASLPKAIFLMGPTASGKTALAIELRKILPVELISVDSALIYKGMDIGTAKPNAEELLAAPHRLLDIRDPSQAYSAADFRRDALAEMADITAAGRIPLLVGGTMLYFKALLEGLSPLPSADPEVRARIEQQAAEQGWESLHRQLQEVDPVAAARIHPNDPQRLSRALEVFFISGKTLTELTQTSGDALPYQVHQFAIAPASRELLHQRIEQRFHQMLASGFEAEVRALFARGDLHTDLPSIRCVGYRQMWSYLEGEISYDEMVYRGVCATRQLAKRQITWLRGWEGVHWLDSEKPEQARDEVLQVVGAIAG.

Position 17-24 (17-24 (GPTASGKT)) interacts with ATP. 19 to 24 (TASGKT) provides a ligand contact to substrate. Interaction with substrate tRNA regions lie at residues 42–45 (DSAL), 166–170 (QRLSR), 247–252 (RCVGYR), and 280–287 (KRQITWLR).

This sequence belongs to the IPP transferase family. In terms of assembly, monomer. It depends on Mg(2+) as a cofactor.

It catalyses the reaction adenosine(37) in tRNA + dimethylallyl diphosphate = N(6)-dimethylallyladenosine(37) in tRNA + diphosphate. Its function is as follows. Catalyzes the transfer of a dimethylallyl group onto the adenine at position 37 in tRNAs that read codons beginning with uridine, leading to the formation of N6-(dimethylallyl)adenosine (i(6)A). In Shigella flexneri serotype 5b (strain 8401), this protein is tRNA dimethylallyltransferase.